We begin with the raw amino-acid sequence, 210 residues long: Proteasome subunit beta (210 aa).

A propeptide spans 1 to 9 (MDNDKHLKG) (removed in mature form; by autocatalysis). The active-site Nucleophile is the Thr-10.

The protein belongs to the peptidase T1B family. In terms of assembly, the 20S proteasome core is composed of 14 alpha and 14 beta subunits that assemble into four stacked heptameric rings, resulting in a barrel-shaped structure. The two inner rings, each composed of seven catalytic beta subunits, are sandwiched by two outer rings, each composed of seven alpha subunits. The catalytic chamber with the active sites is on the inside of the barrel. Has a gated structure, the ends of the cylinder being occluded by the N-termini of the alpha-subunits. Is capped at one or both ends by the proteasome regulatory ATPase, PAN.

It is found in the cytoplasm. The enzyme catalyses Cleavage of peptide bonds with very broad specificity.. With respect to regulation, the formation of the proteasomal ATPase PAN-20S proteasome complex, via the docking of the C-termini of PAN into the intersubunit pockets in the alpha-rings, triggers opening of the gate for substrate entry. Interconversion between the open-gate and close-gate conformations leads to a dynamic regulation of the 20S proteasome proteolysis activity. Its function is as follows. Component of the proteasome core, a large protease complex with broad specificity involved in protein degradation. This Methanococcoides burtonii (strain DSM 6242 / NBRC 107633 / OCM 468 / ACE-M) protein is Proteasome subunit beta.